The chain runs to 267 residues: 5'-nucleotidase SurE (267 aa).

Residues Asp9, Asp10, Ser40, and Asn97 each contribute to the a divalent metal cation site.

It belongs to the SurE nucleotidase family. Requires a divalent metal cation as cofactor.

The protein resides in the cytoplasm. The enzyme catalyses a ribonucleoside 5'-phosphate + H2O = a ribonucleoside + phosphate. Its function is as follows. Nucleotidase that shows phosphatase activity on nucleoside 5'-monophosphates. The chain is 5'-nucleotidase SurE from Helicobacter pylori (strain P12).